Consider the following 475-residue polypeptide: Aspartyl/glutamyl-tRNA(Asn/Gln) amidotransferase subunit B (475 aa).

This sequence belongs to the GatB/GatE family. GatB subfamily. In terms of assembly, heterotrimer of A, B and C subunits.

It carries out the reaction L-glutamyl-tRNA(Gln) + L-glutamine + ATP + H2O = L-glutaminyl-tRNA(Gln) + L-glutamate + ADP + phosphate + H(+). The catalysed reaction is L-aspartyl-tRNA(Asn) + L-glutamine + ATP + H2O = L-asparaginyl-tRNA(Asn) + L-glutamate + ADP + phosphate + 2 H(+). In terms of biological role, allows the formation of correctly charged Asn-tRNA(Asn) or Gln-tRNA(Gln) through the transamidation of misacylated Asp-tRNA(Asn) or Glu-tRNA(Gln) in organisms which lack either or both of asparaginyl-tRNA or glutaminyl-tRNA synthetases. The reaction takes place in the presence of glutamine and ATP through an activated phospho-Asp-tRNA(Asn) or phospho-Glu-tRNA(Gln). This chain is Aspartyl/glutamyl-tRNA(Asn/Gln) amidotransferase subunit B, found in Chromobacterium violaceum (strain ATCC 12472 / DSM 30191 / JCM 1249 / CCUG 213 / NBRC 12614 / NCIMB 9131 / NCTC 9757 / MK).